The following is a 285-amino-acid chain: Probable endonuclease 4 (285 aa).

Zn(2+) is bound by residues His-69, His-109, Glu-145, Asp-179, His-182, His-216, Asp-229, His-231, and Glu-261.

The protein belongs to the AP endonuclease 2 family. Zn(2+) is required as a cofactor.

It catalyses the reaction Endonucleolytic cleavage to 5'-phosphooligonucleotide end-products.. Endonuclease IV plays a role in DNA repair. It cleaves phosphodiester bonds at apurinic or apyrimidinic (AP) sites, generating a 3'-hydroxyl group and a 5'-terminal sugar phosphate. The protein is Probable endonuclease 4 of Yersinia pseudotuberculosis serotype O:1b (strain IP 31758).